The chain runs to 39 residues: Potassium channel toxin alpha-KTx 2.9 (39 aa).

3 cysteine pairs are disulfide-bonded: C7–C29, C13–C34, and C17–C36. The residue at position 39 (N39) is an Asparagine amide.

Belongs to the short scorpion toxin superfamily. Potassium channel inhibitor family. Alpha-KTx 02 subfamily. In terms of tissue distribution, expressed by the venom gland.

The protein resides in the secreted. Blocks Kv1.3/KCNA3 voltage-gated potassium channels of human T-lymphocytes (Kd=0.25 nM). The polypeptide is Potassium channel toxin alpha-KTx 2.9 (Centruroides elegans (Bark scorpion)).